The sequence spans 160 residues: Putative UPF0479 protein YBL113W-A (160 aa).

2 consecutive transmembrane segments (helical) span residues I39–Q59 and V136–H156.

This sequence belongs to the UPF0479 family.

The protein resides in the membrane. The polypeptide is Putative UPF0479 protein YBL113W-A (Saccharomyces cerevisiae (strain ATCC 204508 / S288c) (Baker's yeast)).